Reading from the N-terminus, the 335-residue chain is Tetraacyldisaccharide 4'-kinase (335 aa).

ATP is bound at residue 58–65 (TAGGSGKT).

It belongs to the LpxK family.

It carries out the reaction a lipid A disaccharide + ATP = a lipid IVA + ADP + H(+). It functions in the pathway glycolipid biosynthesis; lipid IV(A) biosynthesis; lipid IV(A) from (3R)-3-hydroxytetradecanoyl-[acyl-carrier-protein] and UDP-N-acetyl-alpha-D-glucosamine: step 6/6. Its function is as follows. Transfers the gamma-phosphate of ATP to the 4'-position of a tetraacyldisaccharide 1-phosphate intermediate (termed DS-1-P) to form tetraacyldisaccharide 1,4'-bis-phosphate (lipid IVA). The polypeptide is Tetraacyldisaccharide 4'-kinase (Shewanella frigidimarina (strain NCIMB 400)).